A 521-amino-acid polypeptide reads, in one-letter code: Nitric oxide reductase transcription regulator NorR2 (521 aa).

The residue at position 56 (aspartate 56) is a 4-aspartylphosphate. The 230-residue stretch at isoleucine 193 to leucine 422 folds into the Sigma-54 factor interaction domain. ATP contacts are provided by residues glycine 221–glutamate 228 and glutamate 293–glutamine 302. Residues tryptophan 497–arginine 516 constitute a DNA-binding region (H-T-H motif).

It participates in nitrogen metabolism; nitrate reduction (denitrification) [regulation]. Required for the nitric oxide (NO) induced expression of NO reductase. Not required for expression of 2 other pathway members, nitrate reductase (nirS) and nitrous oxide reductase (nosZ). This is Nitric oxide reductase transcription regulator NorR2 (norR2) from Cupriavidus necator (strain ATCC 17699 / DSM 428 / KCTC 22496 / NCIMB 10442 / H16 / Stanier 337) (Ralstonia eutropha).